Reading from the N-terminus, the 204-residue chain is Ribosome maturation factor RimM (204 aa).

In terms of domain architecture, PRC barrel spans 117 to 192 (DEDEFFSADL…EVTIDPPDDL (76 aa)).

The protein belongs to the RimM family. In terms of assembly, binds ribosomal protein uS19.

The protein localises to the cytoplasm. Its function is as follows. An accessory protein needed during the final step in the assembly of 30S ribosomal subunit, possibly for assembly of the head region. Essential for efficient processing of 16S rRNA. May be needed both before and after RbfA during the maturation of 16S rRNA. It has affinity for free ribosomal 30S subunits but not for 70S ribosomes. In Methylobacterium nodulans (strain LMG 21967 / CNCM I-2342 / ORS 2060), this protein is Ribosome maturation factor RimM.